The chain runs to 255 residues: Leucyl/phenylalanyl-tRNA--protein transferase (255 aa).

Belongs to the L/F-transferase family.

It is found in the cytoplasm. The catalysed reaction is N-terminal L-lysyl-[protein] + L-leucyl-tRNA(Leu) = N-terminal L-leucyl-L-lysyl-[protein] + tRNA(Leu) + H(+). The enzyme catalyses N-terminal L-arginyl-[protein] + L-leucyl-tRNA(Leu) = N-terminal L-leucyl-L-arginyl-[protein] + tRNA(Leu) + H(+). It carries out the reaction L-phenylalanyl-tRNA(Phe) + an N-terminal L-alpha-aminoacyl-[protein] = an N-terminal L-phenylalanyl-L-alpha-aminoacyl-[protein] + tRNA(Phe). In terms of biological role, functions in the N-end rule pathway of protein degradation where it conjugates Leu, Phe and, less efficiently, Met from aminoacyl-tRNAs to the N-termini of proteins containing an N-terminal arginine or lysine. This Burkholderia thailandensis (strain ATCC 700388 / DSM 13276 / CCUG 48851 / CIP 106301 / E264) protein is Leucyl/phenylalanyl-tRNA--protein transferase.